Consider the following 388-residue polypeptide: Ectopic P granules protein 6 (388 aa).

Over residues 1-25 (MSKKEETIFFRIEKENRPESSKKEE) the composition is skewed to basic and acidic residues. Positions 1 to 33 (MSKKEETIFFRIEKENRPESSKKEEDENSTEEM) are disordered. The WD 1 repeat unit spans residues 217 to 257 (AHLTDIAQVALNCQGTLVATGSTKGTVIRVFDARTKGPLYE). The LRRG motif signature appears at 258-261 (LRRG). A WD 2 repeat occupies 262 to 301 (TVQAHLQCMAFSPCSSYLAVASDKGTLHMFGIRDAEPQKK). The segment at 265–328 (AHLQCMAFSP…LDRPVMAIGF (64 aa)) is required for atg-2 binding.

The protein belongs to the WD repeat PROPPIN family. Interacts with atg-2; the interaction is direct. In terms of tissue distribution, widely expressed in tissues including pharyngeal, muscle and neuronal tissues.

The protein resides in the cytoplasm. It is found in the preautophagosomal structure membrane. Its function is as follows. Component of the epg-6/atg-2 complex, which is involved in the generation of autophagosomes from omegasomes and in the distribution of atg-9 and atg-13 during the autophagy-mediated degradation of protein aggregates. Binds to phosphatidylinositols on preautophagosomes, which are early autophagic structures, to promote autophagosome formation. In particular, binds with high affinity to phosphatidylinositols including phosphatidylinositol 3-phosphate (PtdIns(3)P) and phosphatidylinositol 5-phosphate (PtdIns(5)P), but more weakly to phosphatidylinositol 4-phosphate (PtdIns(4)P) and phosphatidylinositol 3,5-bisphosphate (PtdIns(3,5)P2). Involved in autophagy-mediated degradation of ribosomal RNA and ribosomal proteins in lysosomes, which is essential for maintaining nucleotide homeostasis. The sequence is that of Ectopic P granules protein 6 from Caenorhabditis elegans.